The sequence spans 465 residues: Argininosuccinate lyase (465 aa).

It belongs to the lyase 1 family. Argininosuccinate lyase subfamily.

It is found in the cytoplasm. The catalysed reaction is 2-(N(omega)-L-arginino)succinate = fumarate + L-arginine. It participates in amino-acid biosynthesis; L-arginine biosynthesis; L-arginine from L-ornithine and carbamoyl phosphate: step 3/3. This Aromatoleum aromaticum (strain DSM 19018 / LMG 30748 / EbN1) (Azoarcus sp. (strain EbN1)) protein is Argininosuccinate lyase.